Consider the following 156-residue polypeptide: Ribonuclease H (156 aa).

One can recognise an RNase H type-1 domain in the interval 7 to 148 (QDKIVMIATD…ADQLASDAAI (142 aa)). Mg(2+) is bound by residues D16, E54, D76, and D140.

This sequence belongs to the RNase H family. In terms of assembly, monomer. Mg(2+) is required as a cofactor.

The protein localises to the cytoplasm. It catalyses the reaction Endonucleolytic cleavage to 5'-phosphomonoester.. Its function is as follows. Endonuclease that specifically degrades the RNA of RNA-DNA hybrids. This chain is Ribonuclease H (rnhA), found in Zymomonas mobilis subsp. mobilis (strain ATCC 31821 / ZM4 / CP4).